Consider the following 380-residue polypeptide: Alanine racemase (380 aa).

The active-site Proton acceptor; specific for D-alanine is the K39. Position 39 is an N6-(pyridoxal phosphate)lysine (K39). R137 is a substrate binding site. Y263 serves as the catalytic Proton acceptor; specific for L-alanine. M310 is a binding site for substrate.

The protein belongs to the alanine racemase family. Requires pyridoxal 5'-phosphate as cofactor.

It catalyses the reaction L-alanine = D-alanine. It functions in the pathway amino-acid biosynthesis; D-alanine biosynthesis; D-alanine from L-alanine: step 1/1. Catalyzes the interconversion of L-alanine and D-alanine. May also act on other amino acids. This chain is Alanine racemase (alr), found in Macrococcus caseolyticus (strain JCSC5402) (Macrococcoides caseolyticum).